A 340-amino-acid polypeptide reads, in one-letter code: Ephrin-B3 (340 aa).

An N-terminal signal peptide occupies residues Met-1–Gly-27. The 140-residue stretch at Leu-28 to Val-167 folds into the Ephrin RBD domain. The Extracellular segment spans residues Leu-28 to Ala-227. Disulfide bonds link Cys-62/Cys-104 and Cys-92/Cys-156. Residues Gly-168–Ala-227 are disordered. The span at Pro-185 to Arg-200 shows a compositional bias: basic and acidic residues. Residue Asn-210 is glycosylated (N-linked (GlcNAc...) asparagine). Residues Val-228 to Ala-248 traverse the membrane as a helical segment. The Cytoplasmic portion of the chain corresponds to Met-249–Val-340. The segment at Arg-254 to Gly-300 is disordered. The span at Gly-267–Gly-284 shows a compositional bias: gly residues. Position 271 is an omega-N-methylarginine (Arg-271). Ser-274 is subject to Phosphoserine. The PDZ-binding signature appears at Tyr-338 to Val-340.

It belongs to the ephrin family. Interacts with GRIP1 and GRIP2. In terms of tissue distribution, expressed on lateral floor plate cells, specifically on commissural axon segments that have passed through the floor plate. Expressed in cells of the retinal ganglion cell layer during retinal axon guidance to the optic disk. Expressed in myogenic progenitor cells.

Its subcellular location is the membrane. In terms of biological role, cell surface transmembrane ligand for Eph receptors, a family of receptor tyrosine kinases which are crucial for migration, repulsion and adhesion during neuronal, vascular and epithelial development. Binds promiscuously Eph receptors residing on adjacent cells, leading to contact-dependent bidirectional signaling into neighboring cells. The signaling pathway downstream of the receptor is referred to as forward signaling while the signaling pathway downstream of the ephrin ligand is referred to as reverse signaling. May play a pivotal role in forebrain function. Binds to, and induce the collapse of, commissural axons/growth cones in vitro. May play a role in constraining the orientation of longitudinally projecting axons. This is Ephrin-B3 (Efnb3) from Mus musculus (Mouse).